Reading from the N-terminus, the 251-residue chain is Triosephosphate isomerase (251 aa).

Asn9–Lys11 lines the substrate pocket. His94 functions as the Electrophile in the catalytic mechanism. Glu166 serves as the catalytic Proton acceptor. Substrate is bound by residues Gly172, Ser211, and Gly232–Gly233.

Belongs to the triosephosphate isomerase family. In terms of assembly, homodimer.

It localises to the cytoplasm. The enzyme catalyses D-glyceraldehyde 3-phosphate = dihydroxyacetone phosphate. It participates in carbohydrate biosynthesis; gluconeogenesis. Its pathway is carbohydrate degradation; glycolysis; D-glyceraldehyde 3-phosphate from glycerone phosphate: step 1/1. Functionally, involved in the gluconeogenesis. Catalyzes stereospecifically the conversion of dihydroxyacetone phosphate (DHAP) to D-glyceraldehyde-3-phosphate (G3P). The protein is Triosephosphate isomerase of Stenotrophomonas maltophilia (strain R551-3).